The chain runs to 235 residues: Pyridoxine 5'-phosphate synthase (235 aa).

N6 is a binding site for 3-amino-2-oxopropyl phosphate. Position 8–9 (D8–H9) interacts with 1-deoxy-D-xylulose 5-phosphate. 3-amino-2-oxopropyl phosphate is bound at residue R17. H42 (proton acceptor) is an active-site residue. 1-deoxy-D-xylulose 5-phosphate is bound by residues R44 and H49. E69 (proton acceptor) is an active-site residue. T99 provides a ligand contact to 1-deoxy-D-xylulose 5-phosphate. H189 serves as the catalytic Proton donor. Residues G190 and G211–H212 contribute to the 3-amino-2-oxopropyl phosphate site.

This sequence belongs to the PNP synthase family. Homooctamer; tetramer of dimers.

It localises to the cytoplasm. It carries out the reaction 3-amino-2-oxopropyl phosphate + 1-deoxy-D-xylulose 5-phosphate = pyridoxine 5'-phosphate + phosphate + 2 H2O + H(+). It functions in the pathway cofactor biosynthesis; pyridoxine 5'-phosphate biosynthesis; pyridoxine 5'-phosphate from D-erythrose 4-phosphate: step 5/5. Its function is as follows. Catalyzes the complicated ring closure reaction between the two acyclic compounds 1-deoxy-D-xylulose-5-phosphate (DXP) and 3-amino-2-oxopropyl phosphate (1-amino-acetone-3-phosphate or AAP) to form pyridoxine 5'-phosphate (PNP) and inorganic phosphate. This chain is Pyridoxine 5'-phosphate synthase, found in Chlorobium luteolum (strain DSM 273 / BCRC 81028 / 2530) (Pelodictyon luteolum).